The chain runs to 133 residues: ATP synthase epsilon chain (133 aa).

Belongs to the ATPase epsilon chain family. In terms of assembly, F-type ATPases have 2 components, CF(1) - the catalytic core - and CF(0) - the membrane proton channel. CF(1) has five subunits: alpha(3), beta(3), gamma(1), delta(1), epsilon(1). CF(0) has three main subunits: a, b and c.

It is found in the cell inner membrane. Produces ATP from ADP in the presence of a proton gradient across the membrane. The protein is ATP synthase epsilon chain of Desulfosudis oleivorans (strain DSM 6200 / JCM 39069 / Hxd3) (Desulfococcus oleovorans).